The chain runs to 126 residues: Muscarinic acetylcholine receptor M4 (126 aa).

The segment at 1–90 is disordered; it reads MKQSVKKPPP…LQPRTLNPAS (90 aa). The Cytoplasmic portion of the chain corresponds to 1–126; the sequence is MKQSVKKPPP…PAGMRPAANV (126 aa). Over residues 28 to 39 the composition is skewed to pro residues; the sequence is APPPVLPPPPRP. Residues 47-57 are compositionally biased toward polar residues; that stretch reads NESSSGSATQN. A compositionally biased stretch (low complexity) spans 64–75; sequence TELSTTEATTPA.

The protein belongs to the G-protein coupled receptor 1 family. Muscarinic acetylcholine receptor subfamily. CHRM4 sub-subfamily.

Its subcellular location is the cell membrane. The protein resides in the postsynaptic cell membrane. In terms of biological role, the muscarinic acetylcholine receptor mediates various cellular responses, including inhibition of adenylate cyclase, breakdown of phosphoinositides and modulation of potassium channels through the action of G proteins. Primary transducing effect is inhibition of adenylate cyclase. May couple to multiple functional responses in cell lines. This Bos taurus (Bovine) protein is Muscarinic acetylcholine receptor M4 (CHRM4).